A 130-amino-acid chain; its full sequence is MSKPRIALIAHDAKKDEIVALAGEFRATLAQCRLVATGTTGGRIADAHGLEVERKLSGPLGGDLQIGAELADGRIDIVVFLRDPMTAQPHDPDITALVRACDVHDVPVATNVATARMLLDDLARNMQDVC.

Residues 1–130 (MSKPRIALIA…DLARNMQDVC (130 aa)) form the MGS-like domain. Substrate contacts are provided by residues H11, K15, 37 to 40 (TGTT), and 57 to 58 (SG). D63 functions as the Proton donor/acceptor in the catalytic mechanism. Residue H90 participates in substrate binding.

Belongs to the methylglyoxal synthase family.

It catalyses the reaction dihydroxyacetone phosphate = methylglyoxal + phosphate. Its function is as follows. Catalyzes the formation of methylglyoxal from dihydroxyacetone phosphate. In Burkholderia lata (strain ATCC 17760 / DSM 23089 / LMG 22485 / NCIMB 9086 / R18194 / 383), this protein is Methylglyoxal synthase.